A 306-amino-acid chain; its full sequence is Protease HtpX homolog (306 aa).

The next 2 membrane-spanning stretches (helical) occupy residues threonine 10 to glycine 30 and glutamine 33 to serine 53. Zn(2+) is bound at residue histidine 135. The active site involves glutamate 136. Position 139 (histidine 139) interacts with Zn(2+). 2 helical membrane passes run alanine 149–glycine 169 and glycine 181–isoleucine 201. Glutamate 210 contacts Zn(2+).

It belongs to the peptidase M48B family. It depends on Zn(2+) as a cofactor.

The protein resides in the cell membrane. The polypeptide is Protease HtpX homolog (Bifidobacterium longum (strain NCC 2705)).